The primary structure comprises 189 residues: MPFIRRPKRAILIPPLHLTLKDDDKVLVVETVGTLIISGMTPSNLTEKLGLAMKLASAILGGDSHPAFNPLVEIFSGAMEFGASVEKLDFMTRENKVITTYKVARGKAVALSNFPMEKRVGEKSYTTQIRNGSITYTGSFLFSAEHVGLKDNRSLFAAGEGLRESPDMAQAREAFAGSLPKGKNESSRK.

The protein belongs to the novirhabdovirus matrix protein family. In terms of assembly, homomultimer. Interacts with nucleoprotein and with the cytoplasmic domain of glycoprotein.

It is found in the virion membrane. The protein localises to the host endomembrane system. In terms of biological role, plays a major role in assembly and budding of virion. Completely covers the ribonucleoprotein coil and keep it in condensed bullet-shaped form. Inhibits viral transcription and stimulates replication. This Gobiosoma bosc (Naked goby) protein is Matrix protein (M).